Consider the following 515-residue polypeptide: Serine/threonine-protein kinase STE7 (515 aa).

The 276-residue stretch at Leu-191–Ile-466 folds into the Protein kinase domain. ATP contacts are provided by residues Ile-197–Val-205 and Lys-220. Asp-331 acts as the Proton acceptor in catalysis. Ser-359 carries the post-translational modification Phosphoserine. Position 363 is a phosphothreonine (Thr-363).

This sequence belongs to the protein kinase superfamily. STE Ser/Thr protein kinase family. MAP kinase kinase subfamily.

It catalyses the reaction L-seryl-[protein] + ATP = O-phospho-L-seryl-[protein] + ADP + H(+). It carries out the reaction L-threonyl-[protein] + ATP = O-phospho-L-threonyl-[protein] + ADP + H(+). The catalysed reaction is L-tyrosyl-[protein] + ATP = O-phospho-L-tyrosyl-[protein] + ADP + H(+). Its activity is regulated as follows. Phosphorylated at multiple sites in response to pheromone. In terms of biological role, serine/threonine protein kinase required for cell-type-specific transcription and signal transduction in yeast. It is thought that it is phosphorylated by the ste11 protein kinase and that it can phosphorylate the FUS3 and or KSS1 kinases. The sequence is that of Serine/threonine-protein kinase STE7 (STE7) from Saccharomyces cerevisiae (strain ATCC 204508 / S288c) (Baker's yeast).